The chain runs to 428 residues: Phosphomethylpyrimidine synthase (428 aa).

Substrate is bound by residues N66, M94, Y123, H162, 184–186 (SRG), 225–228 (DALR), and E264. H268 is a Zn(2+) binding site. A substrate-binding site is contributed by Y291. H332 provides a ligand contact to Zn(2+). C408, C411, and C415 together coordinate [4Fe-4S] cluster.

This sequence belongs to the ThiC family. The cofactor is [4Fe-4S] cluster.

It carries out the reaction 5-amino-1-(5-phospho-beta-D-ribosyl)imidazole + S-adenosyl-L-methionine = 4-amino-2-methyl-5-(phosphooxymethyl)pyrimidine + CO + 5'-deoxyadenosine + formate + L-methionine + 3 H(+). It participates in cofactor biosynthesis; thiamine diphosphate biosynthesis. Its function is as follows. Catalyzes the synthesis of the hydroxymethylpyrimidine phosphate (HMP-P) moiety of thiamine from aminoimidazole ribotide (AIR) in a radical S-adenosyl-L-methionine (SAM)-dependent reaction. The protein is Phosphomethylpyrimidine synthase of Sulfolobus acidocaldarius (strain ATCC 33909 / DSM 639 / JCM 8929 / NBRC 15157 / NCIMB 11770).